We begin with the raw amino-acid sequence, 136 residues long: Small ribosomal subunit protein uS11 (136 aa).

This sequence belongs to the universal ribosomal protein uS11 family. As to quaternary structure, part of the 30S ribosomal subunit. Interacts with proteins S7 and S18. Binds to IF-3.

Located on the platform of the 30S subunit, it bridges several disparate RNA helices of the 16S rRNA. Forms part of the Shine-Dalgarno cleft in the 70S ribosome. The sequence is that of Small ribosomal subunit protein uS11 from Leptospira borgpetersenii serovar Hardjo-bovis (strain JB197).